Consider the following 141-residue polypeptide: Large ribosomal subunit protein uL11 (141 aa).

Belongs to the universal ribosomal protein uL11 family. In terms of assembly, part of the ribosomal stalk of the 50S ribosomal subunit. Interacts with L10 and the large rRNA to form the base of the stalk. L10 forms an elongated spine to which L12 dimers bind in a sequential fashion forming a multimeric L10(L12)X complex. In terms of processing, one or more lysine residues are methylated.

Its function is as follows. Forms part of the ribosomal stalk which helps the ribosome interact with GTP-bound translation factors. In Methylacidiphilum infernorum (isolate V4) (Methylokorus infernorum (strain V4)), this protein is Large ribosomal subunit protein uL11.